The following is a 324-amino-acid chain: o-succinylbenzoate synthase (324 aa).

K135 acts as the Proton donor in catalysis. D163, E192, and D215 together coordinate Mg(2+). The active-site Proton acceptor is K237.

It belongs to the mandelate racemase/muconate lactonizing enzyme family. MenC type 1 subfamily. A divalent metal cation serves as cofactor.

The catalysed reaction is (1R,6R)-6-hydroxy-2-succinyl-cyclohexa-2,4-diene-1-carboxylate = 2-succinylbenzoate + H2O. Its pathway is quinol/quinone metabolism; 1,4-dihydroxy-2-naphthoate biosynthesis; 1,4-dihydroxy-2-naphthoate from chorismate: step 4/7. It participates in quinol/quinone metabolism; menaquinone biosynthesis. In terms of biological role, converts 2-succinyl-6-hydroxy-2,4-cyclohexadiene-1-carboxylate (SHCHC) to 2-succinylbenzoate (OSB). This chain is o-succinylbenzoate synthase, found in Aliivibrio fischeri (strain MJ11) (Vibrio fischeri).